Reading from the N-terminus, the 265-residue chain is Probable aquaporin TIP3-2 (265 aa).

2 helical membrane passes run leucine 32–leucine 52 and leucine 62–valine 82. Positions asparagine 92 to alanine 94 match the NPA 1 motif. 3 consecutive transmembrane segments (helical) span residues alanine 110–leucine 130, alanine 151–valine 171, and aspartate 179–phenylalanine 199. Positions asparagine 205 to alanine 207 match the NPA 2 motif. Residues tryptophan 223–valine 243 form a helical membrane-spanning segment.

This sequence belongs to the MIP/aquaporin (TC 1.A.8) family. TIP (TC 1.A.8.10) subfamily. As to expression, expressed in leaves and at lower levels in roots.

It localises to the vacuole membrane. Aquaporins facilitate the transport of water and small neutral solutes across cell membranes. May be involved in transport from the vacuolar compartment to the cytoplasm. This is Probable aquaporin TIP3-2 (TIP3-2) from Oryza sativa subsp. japonica (Rice).